The following is a 218-amino-acid chain: Ornithine decarboxylase antizyme 2 (218 aa).

Belongs to the ODC antizyme family. In terms of assembly, interacts with ODC1 and thereby sterically blocks ODC homodimerization. Expressed ubiquitously in 24 hours embryos, with highest levels in telencephalon, lens, retina, cerebellum and hindbrain primordia.

In terms of biological role, ornithine decarboxylase (ODC) antizyme protein that negatively regulates ODC activity and intracellular polyamine biosynthesis and uptake in response to increased intracellular polyamine levels. Binds to ODC monomers, inhibiting the assembly of the functional ODC homodimers. Does not target the ODC monomers for degradation, which allows a protein synthesis-independent restoration of ODC activity. This is Ornithine decarboxylase antizyme 2 (oaz1b) from Danio rerio (Zebrafish).